Consider the following 388-residue polypeptide: Na(+)/H(+) antiporter NhaA (388 aa).

Transmembrane regions (helical) follow at residues 14–34, 59–79, 95–115, 125–145, 154–174, 179–199, 219–239, 254–274, 287–307, 328–348, and 356–376; these read GGII…SGFT, MLLW…GLEV, AFPV…YLAF, GWAI…ALLG, IFLM…IALF, LSMV…VLNL, VLKS…FIPL, VLHP…NAGV, ILPL…ISLF, IMAV…IASL, and ALIN…AVIG.

It belongs to the NhaA Na(+)/H(+) (TC 2.A.33) antiporter family.

The protein resides in the cell inner membrane. It carries out the reaction Na(+)(in) + 2 H(+)(out) = Na(+)(out) + 2 H(+)(in). In terms of biological role, na(+)/H(+) antiporter that extrudes sodium in exchange for external protons. This is Na(+)/H(+) antiporter NhaA from Citrobacter koseri (strain ATCC BAA-895 / CDC 4225-83 / SGSC4696).